The chain runs to 619 residues: Chaperone protein HscA homolog (619 aa).

It belongs to the heat shock protein 70 family.

In terms of biological role, chaperone involved in the maturation of iron-sulfur cluster-containing proteins. Has a low intrinsic ATPase activity which is markedly stimulated by HscB. This Haemophilus influenzae (strain 86-028NP) protein is Chaperone protein HscA homolog.